The sequence spans 1572 residues: E3 ubiquitin-protein ligase HECW2 (1572 aa).

Serine 48 bears the Phosphoserine mark. One can recognise a C2 domain in the interval 167 to 301 (GAEGMEGGAS…QAIGDQMLSY (135 aa)). 2 disordered regions span residues 341–452 (VNSV…SSFP) and 489–796 (IMFS…PSVR). Residues 400–410 (TSTSSRTSPPR) are compositionally biased toward low complexity. Basic and acidic residues predominate over residues 518–532 (ASTHEAASFEDKPEN). Composition is skewed to polar residues over residues 572–588 (EVDQPTSGADTGTSDAS), 597–614 (ETESLDQGSEPSQVSSET), 643–664 (SSCNESVTTQLSSVDTRCSSLE), and 688–703 (PTSSGPAEGSQESVCT). Positions 737–1068 (WQRRGSLEGA…PRPSSTFNTV (332 aa)) are interaction with TP73. Residues 744-776 (EGAAAAAESPPQEEGSAGEAQGTCEGATAQEEG) show a composition bias toward low complexity. In terms of domain architecture, WW 1 spans 807–840 (EALPPNWEARIDSHGRIFYVDHVNRTTTWQRPTA). The stretch at 847–874 (LQRSNSIQQMEQLNRRYQSIRRTMTNER) forms a coiled coil. Phosphoserine occurs at positions 852 and 909. The 34-residue stretch at 985 to 1018 (LELPRGWEMKHDHQGKAFFVDHNSRTTTFIDPRL) folds into the WW 2 domain. Disordered stretches follow at residues 1024 to 1069 (RPTS…NTVS) and 1161 to 1187 (CQSPRGSPVSSPQNSPGTQRANARAPA). The segment covering 1031 to 1040 (HRQHLTRQRS) has biased composition (basic residues). Polar residues predominate over residues 1161-1181 (CQSPRGSPVSSPQNSPGTQRA). A Phosphoserine modification is found at serine 1175. The 336-residue stretch at 1237–1572 (SRKDLQRNKL…VEETSTFGLE (336 aa)) folds into the HECT domain. The active-site Glycyl thioester intermediate is the cysteine 1540.

In terms of assembly, interacts with TP73. Interacts with FZR1. Post-translationally, ubiquitinated and degraded during mitotic exit by APC/C-Cdh1. In terms of tissue distribution, predominantly expressed in adult brain, lung and heart.

The protein resides in the cytoplasm. It localises to the cytoskeleton. It is found in the spindle. The catalysed reaction is S-ubiquitinyl-[E2 ubiquitin-conjugating enzyme]-L-cysteine + [acceptor protein]-L-lysine = [E2 ubiquitin-conjugating enzyme]-L-cysteine + N(6)-ubiquitinyl-[acceptor protein]-L-lysine.. Its pathway is protein modification; protein ubiquitination. E3 ubiquitin-protein ligase that mediates ubiquitination of TP73. Acts to stabilize TP73 and enhance activation of transcription by TP73. Involved in the regulation of mitotic metaphase/anaphase transition. The sequence is that of E3 ubiquitin-protein ligase HECW2 (HECW2) from Homo sapiens (Human).